The following is an 84-amino-acid chain: Exodeoxyribonuclease 7 small subunit (84 aa).

This sequence belongs to the XseB family. As to quaternary structure, heterooligomer composed of large and small subunits.

It is found in the cytoplasm. The enzyme catalyses Exonucleolytic cleavage in either 5'- to 3'- or 3'- to 5'-direction to yield nucleoside 5'-phosphates.. Bidirectionally degrades single-stranded DNA into large acid-insoluble oligonucleotides, which are then degraded further into small acid-soluble oligonucleotides. The sequence is that of Exodeoxyribonuclease 7 small subunit from Janthinobacterium sp. (strain Marseille) (Minibacterium massiliensis).